We begin with the raw amino-acid sequence, 163 residues long: Augmin complex subunit wac (163 aa).

Positions E86–L115 form a coiled coil.

As to quaternary structure, component of the augmin complex composed of dgt2, dgt3, dgt4, dgt5, dgt6, msd1, msd5 and wac. The complex interacts directly or indirectly with microtubules and is required for centrosome-independent generation of spindle microtubules. wac interacts directly (via coiled coil) with dgt2. In terms of tissue distribution, in adult females, detected only in the abdomen with no expression in the head or thorax (at protein level).

Its subcellular location is the cytoplasm. The protein resides in the cytoskeleton. It localises to the spindle. The protein localises to the spindle pole. As part of the augmin complex, plays a role in centrosome-independent generation of spindle microtubules. The complex is required for mitotic spindle assembly through its involvement in localizing gamma-tubulin to spindle microtubules. wac is dispensable for somatic mitosis and for assembly of spindle microtubules in oocytes during female meiosis but is required during female meiosis for chromosome alignment and segregation. It is required for microtubule assembly near spindle poles in oocytes. It is also required for acentrosomal microtubule nucleation and meiotic spindle formation during male meiosis. wac binds to microtubules in vitro. The protein is Augmin complex subunit wac of Drosophila melanogaster (Fruit fly).